The chain runs to 415 residues: Ribulose bisphosphate carboxylase large chain (415 aa).

Positions 101 and 151 each coordinate substrate. Catalysis depends on lysine 153, which acts as the Proton acceptor. Substrate is bound at residue lysine 155. Mg(2+) contacts are provided by lysine 179, aspartate 181, and glutamate 182. An N6-carboxylysine modification is found at lysine 179. Histidine 272 serves as the catalytic Proton acceptor. Substrate-binding residues include arginine 273, histidine 305, and serine 357.

Belongs to the RuBisCO large chain family. Type I subfamily. As to quaternary structure, heterohexadecamer of 8 large chains and 8 small chains; disulfide-linked. The disulfide link is formed within the large subunit homodimers. Requires Mg(2+) as cofactor. In terms of processing, the disulfide bond which can form in the large chain dimeric partners within the hexadecamer appears to be associated with oxidative stress and protein turnover.

It is found in the plastid. Its subcellular location is the chloroplast. The catalysed reaction is 2 (2R)-3-phosphoglycerate + 2 H(+) = D-ribulose 1,5-bisphosphate + CO2 + H2O. The enzyme catalyses D-ribulose 1,5-bisphosphate + O2 = 2-phosphoglycolate + (2R)-3-phosphoglycerate + 2 H(+). In terms of biological role, ruBisCO catalyzes two reactions: the carboxylation of D-ribulose 1,5-bisphosphate, the primary event in carbon dioxide fixation, as well as the oxidative fragmentation of the pentose substrate in the photorespiration process. Both reactions occur simultaneously and in competition at the same active site. This chain is Ribulose bisphosphate carboxylase large chain, found in Cibotium barometz (Scythian lamb).